A 496-amino-acid polypeptide reads, in one-letter code: Glycerol kinase (496 aa).

Position 14 (T14) interacts with ADP. 2 residues coordinate ATP: T14 and T15. Residue T14 coordinates sn-glycerol 3-phosphate. The sn-glycerol 3-phosphate site is built by R84, E85, Y136, and D246. The glycerol site is built by R84, E85, Y136, D246, and Q247. 2 residues coordinate ADP: T268 and G313. Residues T268, G313, Q317, and G414 each contribute to the ATP site. Positions 414 and 418 each coordinate ADP.

Belongs to the FGGY kinase family.

The catalysed reaction is glycerol + ATP = sn-glycerol 3-phosphate + ADP + H(+). It functions in the pathway polyol metabolism; glycerol degradation via glycerol kinase pathway; sn-glycerol 3-phosphate from glycerol: step 1/1. Its activity is regulated as follows. Inhibited by fructose 1,6-bisphosphate (FBP). Functionally, key enzyme in the regulation of glycerol uptake and metabolism. Catalyzes the phosphorylation of glycerol to yield sn-glycerol 3-phosphate. This chain is Glycerol kinase, found in Myxococcus xanthus (strain DK1622).